A 1059-amino-acid chain; its full sequence is Carbamoyl phosphate synthase large chain (1059 aa).

Residues 1 to 401 (MPKRKDIQKV…AMLKAVRSLE (401 aa)) are carboxyphosphate synthetic domain. Residues arginine 129, arginine 169, glycine 175, glycine 176, arginine 208, isoleucine 210, glutamate 215, glycine 241, valine 242, histidine 243, glutamine 284, and glutamate 298 each contribute to the ATP site. The region spanning 133–327 (KALMERLNEP…IAKMAAKIAV (195 aa)) is the ATP-grasp 1 domain. Glutamine 284, glutamate 298, and asparagine 300 together coordinate Mg(2+). Residues glutamine 284, glutamate 298, and asparagine 300 each contribute to the Mn(2+) site. The segment at 402–546 (IGVTGLNDLT…YATYERENES (145 aa)) is oligomerization domain. Residues 547–929 (VRSKKPSVIV…ALYKAFVASN (383 aa)) are carbamoyl phosphate synthetic domain. Residues 671 to 861 (DQVIKTLALP…LAQLATRVML (191 aa)) enclose the ATP-grasp 2 domain. 10 residues coordinate ATP: arginine 707, serine 746, leucine 748, glutamate 752, glycine 777, valine 778, histidine 779, serine 780, glutamine 820, and glutamate 832. Mg(2+) is bound by residues glutamine 820, glutamate 832, and asparagine 834. The Mn(2+) site is built by glutamine 820, glutamate 832, and asparagine 834. The MGS-like domain occupies 930–1059 (IKVPQYGNVL…SRSFTVNEMK (130 aa)). The tract at residues 930–1059 (IKVPQYGNVL…SRSFTVNEMK (130 aa)) is allosteric domain.

This sequence belongs to the CarB family. In terms of assembly, composed of two chains; the small (or glutamine) chain promotes the hydrolysis of glutamine to ammonia, which is used by the large (or ammonia) chain to synthesize carbamoyl phosphate. Tetramer of heterodimers (alpha,beta)4. Mg(2+) serves as cofactor. Requires Mn(2+) as cofactor.

The catalysed reaction is hydrogencarbonate + L-glutamine + 2 ATP + H2O = carbamoyl phosphate + L-glutamate + 2 ADP + phosphate + 2 H(+). The enzyme catalyses hydrogencarbonate + NH4(+) + 2 ATP = carbamoyl phosphate + 2 ADP + phosphate + 2 H(+). It participates in amino-acid biosynthesis; L-arginine biosynthesis; carbamoyl phosphate from bicarbonate: step 1/1. Its pathway is pyrimidine metabolism; UMP biosynthesis via de novo pathway; (S)-dihydroorotate from bicarbonate: step 1/3. Its function is as follows. Large subunit of the glutamine-dependent carbamoyl phosphate synthetase (CPSase). CPSase catalyzes the formation of carbamoyl phosphate from the ammonia moiety of glutamine, carbonate, and phosphate donated by ATP, constituting the first step of 2 biosynthetic pathways, one leading to arginine and/or urea and the other to pyrimidine nucleotides. The large subunit (synthetase) binds the substrates ammonia (free or transferred from glutamine from the small subunit), hydrogencarbonate and ATP and carries out an ATP-coupled ligase reaction, activating hydrogencarbonate by forming carboxy phosphate which reacts with ammonia to form carbamoyl phosphate. In Leuconostoc citreum (strain KM20), this protein is Carbamoyl phosphate synthase large chain.